The sequence spans 489 residues: Cytochrome P450 monooxygenase bfoB (489 aa).

A signal peptide spans 1–18; that stretch reads MLALYLIAGLLVGLLVYR. N-linked (GlcNAc...) asparagine glycosylation is found at Asn113, Asn348, and Asn386. Cys429 is a heme binding site.

The protein belongs to the cytochrome P450 family. Requires heme as cofactor.

It catalyses the reaction 2 fonsecin B + NADPH + O2 + H(+) = bifonsecin B + NADP(+) + 2 H2O. It carries out the reaction 2 rubrofusarin B + NADPH + O2 + 3 H(+) = nigerone + NADP(+) + 2 H2O. It functions in the pathway secondary metabolite biosynthesis. Cytochrome P450 monooxygenase; part of the gene cluster that mediates the biosynthesis of bifonsecin B, a dimeric gamma-naphthopyrone. The first step in the biosynthesis of bifonsecin B is the production of gamma-naphthopyrone precursor YWA1 by the non-reducing polyketide synthase albA, via condensation of one acetyl-CoA starter unit with 6 malonyl-CoA units. YWA1 is then methylated by bfoE at position C-6 to yield foncesin which is further methylated at position C-8 by bfoD to produce fonsecin B. A key enzyme in the biosynthetic pathway is the cytochrome P450 monooxygenase bfoB which catalyzes the oxidative dimerization of fonsecin B to bifonsecin B. Bfob also catalyzes the oxidative dimerization of rubrofusarin B into nigerone. The stereoselectivity of bfoB is influenced by the two natural monomeric substrates; homodimerization of fonsecin B yields a stereochemically pure biaryl, M-foncerine B, while rubrofusarin B yields a mixture of enantiomers M- and P-nigerone. In Aspergillus brasiliensis (strain CBS 101740 / IMI 381727 / IBT 21946), this protein is Cytochrome P450 monooxygenase bfoB.